We begin with the raw amino-acid sequence, 236 residues long: Rho-related GTP-binding protein RhoV (236 aa).

The disordered stretch occupies residues 1 to 27; the sequence is MPPRELSEAEPPPLRAPTPPPRRRSAP. A compositionally biased stretch (pro residues) spans 10-20; sequence EPPPLRAPTPP. Position 25 is a phosphoserine (Ser-25). GTP-binding positions include 38 to 45, 85 to 89, and 143 to 146; these read GDGAVGKS, DTAGQ, and TQAD. The S-palmitoyl cysteine moiety is linked to residue Cys-234.

It belongs to the small GTPase superfamily. Rho family. Interacts with PAK2. Mg(2+) is required as a cofactor. Highly expressed in pancreas, placenta, and fetal brain.

It localises to the cell membrane. The protein localises to the endosome membrane. In terms of biological role, plays a role in the control of the actin cytoskeleton via activation of the JNK pathway. The polypeptide is Rho-related GTP-binding protein RhoV (Homo sapiens (Human)).